The primary structure comprises 311 residues: Malate dehydrogenase (311 aa).

Residues 7 to 13 (GAAGGIG) and D34 each bind NAD(+). Residues R81 and R87 each contribute to the substrate site. NAD(+) contacts are provided by residues N94 and 117 to 119 (ITN). Substrate-binding residues include N119 and R153. The Proton acceptor role is filled by H177. Residue M227 participates in NAD(+) binding.

It belongs to the LDH/MDH superfamily. MDH type 1 family. As to quaternary structure, homodimer.

The catalysed reaction is (S)-malate + NAD(+) = oxaloacetate + NADH + H(+). Its function is as follows. Catalyzes the reversible oxidation of malate to oxaloacetate. This chain is Malate dehydrogenase, found in Aeromonas hydrophila subsp. hydrophila (strain ATCC 7966 / DSM 30187 / BCRC 13018 / CCUG 14551 / JCM 1027 / KCTC 2358 / NCIMB 9240 / NCTC 8049).